A 78-amino-acid polypeptide reads, in one-letter code: Acyl carrier protein (78 aa).

The region spanning 2–77 (SDIAERVKKI…DAVKFIEKAQ (76 aa)) is the Carrier domain. Residue S37 is modified to O-(pantetheine 4'-phosphoryl)serine.

This sequence belongs to the acyl carrier protein (ACP) family. Post-translationally, 4'-phosphopantetheine is transferred from CoA to a specific serine of apo-ACP by AcpS. This modification is essential for activity because fatty acids are bound in thioester linkage to the sulfhydryl of the prosthetic group.

It is found in the cytoplasm. It participates in lipid metabolism; fatty acid biosynthesis. Its function is as follows. Carrier of the growing fatty acid chain in fatty acid biosynthesis. The chain is Acyl carrier protein from Rhizobium etli (strain CIAT 652).